Consider the following 101-residue polypeptide: Hg-scorpine-like-2 (101 aa).

The N-terminal stretch at 1–17 (MKLTILILLVITSFCSC) is a signal peptide. Residues 60-100 (QQLCMFNKDVAGWCEKSCQQSAHQKGYCHGTKCKCGIPLNY) form the BetaSPN-type CS-alpha/beta domain. 3 cysteine pairs are disulfide-bonded: cysteine 63/cysteine 87, cysteine 73/cysteine 92, and cysteine 77/cysteine 94.

This sequence belongs to the long chain scorpion toxin family. Class 3 subfamily. As to expression, expressed by the venom gland.

It localises to the secreted. Functionally, inhibits voltage-gated potassium channels. The polypeptide is Hg-scorpine-like-2 (Hoffmannihadrurus gertschi (Scorpion)).